Consider the following 173-residue polypeptide: MTYFVIFLGICFMLGVLAVASNPSPYYGVVGLVVASVMGCGWLVSLGVSFVSLALFLVYLGGMLVVFVYSVSLAADPYPEAWGDWRVVGYGLGFVLVVWMGVVLGGLVDFWKVGVVTVDGGGVSFARLDFSGVAVFYSCGVGLFLVAGWGLLLALFVVLELVRGLSRGAIRAV.

A run of 5 helical transmembrane segments spans residues 1 to 21 (MTYF…AVAS), 27 to 47 (YGVV…VSLG), 48 to 68 (VSFV…VVFV), 87 to 107 (VVGY…LGGL), and 139 to 159 (CGVG…FVVL).

Belongs to the complex I subunit 6 family. In terms of assembly, core subunit of respiratory chain NADH dehydrogenase (Complex I) which is composed of 45 different subunits.

It localises to the mitochondrion inner membrane. The catalysed reaction is a ubiquinone + NADH + 5 H(+)(in) = a ubiquinol + NAD(+) + 4 H(+)(out). Its function is as follows. Core subunit of the mitochondrial membrane respiratory chain NADH dehydrogenase (Complex I) which catalyzes electron transfer from NADH through the respiratory chain, using ubiquinone as an electron acceptor. Essential for the catalytic activity and assembly of complex I. The protein is NADH-ubiquinone oxidoreductase chain 6 (MT-ND6) of Gallus gallus (Chicken).